The sequence spans 305 residues: MTSIRVLGSAAGGGFPQWNCNCHNCDGVRRGTVRATPRTQSSIALTGDGPDAILVNASPDILQQLRQAPALQPARAPRDTAIAAVVLMDAQIDHVTGLLMLREHREALPLYATAAVLDDLGAAFPLTRILSHYCGLRTHALPCDGTAFSVPPLDGLTLTAIPLESKAPPYSPNRHAPRAGDNIGLRIEDRRSGRSAFYAPGLGRIDDHVFAELHSADIVLVDGTFWRDDEMQAPGFSGKSAADMGHLALSGPGGMIEVLERLPASRKILIHINNTNPVLVEDSPERAELARHGIEVAYDGMEIAL.

Belongs to the PqqB family.

It participates in cofactor biosynthesis; pyrroloquinoline quinone biosynthesis. Functionally, may be involved in the transport of PQQ or its precursor to the periplasm. The chain is Coenzyme PQQ synthesis protein B from Cupriavidus necator (strain ATCC 17699 / DSM 428 / KCTC 22496 / NCIMB 10442 / H16 / Stanier 337) (Ralstonia eutropha).